The chain runs to 259 residues: Undecaprenyl-diphosphatase 3 (259 aa).

8 helical membrane-spanning segments follow: residues 1 to 21 (MNWL…FLPI), 39 to 59 (AGLF…FIYY), 71 to 91 (FSKL…IGLL), 99 to 119 (ISKT…FLYM), 133 to 153 (ITYK…FPAI), 174 to 194 (AYFS…LQFV), 208 to 228 (SLIV…SWMI), and 236 to 256 (LKVF…LQFT).

This sequence belongs to the UppP family.

The protein localises to the cell membrane. It catalyses the reaction di-trans,octa-cis-undecaprenyl diphosphate + H2O = di-trans,octa-cis-undecaprenyl phosphate + phosphate + H(+). Catalyzes the dephosphorylation of undecaprenyl diphosphate (UPP). Confers resistance to bacitracin. The chain is Undecaprenyl-diphosphatase 3 from Bacillus cereus (strain ATCC 10987 / NRS 248).